The sequence spans 205 residues: Holliday junction branch migration complex subunit RuvA (205 aa).

The segment at Met1 to Lys62 is domain I. Residues Thr63–Leu141 form a domain II region. Residues Phe142–Lys152 are flexible linker. Positions Gly153–Arg205 are domain III.

Belongs to the RuvA family. As to quaternary structure, homotetramer. Forms an RuvA(8)-RuvB(12)-Holliday junction (HJ) complex. HJ DNA is sandwiched between 2 RuvA tetramers; dsDNA enters through RuvA and exits via RuvB. An RuvB hexamer assembles on each DNA strand where it exits the tetramer. Each RuvB hexamer is contacted by two RuvA subunits (via domain III) on 2 adjacent RuvB subunits; this complex drives branch migration. In the full resolvosome a probable DNA-RuvA(4)-RuvB(12)-RuvC(2) complex forms which resolves the HJ.

The protein localises to the cytoplasm. In terms of biological role, the RuvA-RuvB-RuvC complex processes Holliday junction (HJ) DNA during genetic recombination and DNA repair, while the RuvA-RuvB complex plays an important role in the rescue of blocked DNA replication forks via replication fork reversal (RFR). RuvA specifically binds to HJ cruciform DNA, conferring on it an open structure. The RuvB hexamer acts as an ATP-dependent pump, pulling dsDNA into and through the RuvAB complex. HJ branch migration allows RuvC to scan DNA until it finds its consensus sequence, where it cleaves and resolves the cruciform DNA. This chain is Holliday junction branch migration complex subunit RuvA, found in Bacillus mycoides (strain KBAB4) (Bacillus weihenstephanensis).